The chain runs to 145 residues: MYPAHLLVLLAVCVSLLGAASIPPLPLNVAQFDNMIECANYGSRPSWHYMEYGCYCGKEGSGTPVDELDRCCKAHDDCYTEAEKRRCHPKFSAYSWKCGSDGPTCDPETGCKRTVCDCDATAAKCFAKAPFNQANWNIDTETHCQ.

Positions 1–21 (MYPAHLLVLLAVCVSLLGAAS) are cleaved as a signal peptide. Residues 22 to 27 (IPPLPL) constitute a propeptide that is removed on maturation. Intrachain disulfides connect cysteine 38–cysteine 98, cysteine 54–cysteine 144, cysteine 56–cysteine 72, cysteine 71–cysteine 125, cysteine 78–cysteine 118, cysteine 87–cysteine 111, and cysteine 105–cysteine 116. 2 residues coordinate Ca(2+): tyrosine 55 and glycine 57. Histidine 75 is a catalytic residue. Aspartate 76 is a binding site for Ca(2+). Aspartate 119 is a catalytic residue.

It belongs to the phospholipase A2 family. Group I subfamily. D49 sub-subfamily. Ca(2+) is required as a cofactor. In terms of tissue distribution, expressed by the venom gland.

It is found in the secreted. It carries out the reaction a 1,2-diacyl-sn-glycero-3-phosphocholine + H2O = a 1-acyl-sn-glycero-3-phosphocholine + a fatty acid + H(+). Its function is as follows. PLA2 catalyzes the calcium-dependent hydrolysis of the 2-acyl groups in 3-sn-phosphoglycerides. In Notechis scutatus scutatus (Mainland tiger snake), this protein is Acidic phospholipase A2.